The following is a 164-amino-acid chain: MLFLGQKALLLVLAISIPSDWLPLGVSGQRGDDVPETFTDDPNLVNDPSTDDTALADITPSTDDLAGDKNATAECRDEKFACTRLYSVHRPVRQCVHQSCFTSLRRMYIINNEICSRLVCKEHEAMKDELCRQMAGLPPRRLRRSNYFRLPPCENMNLQRPDGL.

Positions 1-28 are cleaved as a signal peptide; the sequence is MLFLGQKALLLVLAISIPSDWLPLGVSG. The Cell attachment site motif lies at 30-32; it reads RGD. The N-linked (GlcNAc...) asparagine glycan is linked to asparagine 70.

This sequence belongs to the MFAP family. As to quaternary structure, interacts with TGFB2. Interacts with BMP2. Interacts with FBN1 (via N-terminal domain) and FBN2. In terms of processing, forms intermolecular disulfide bonds either with other MAGP-2 molecules or with other components of the microfibrils.

The protein resides in the secreted. The protein localises to the extracellular space. Its subcellular location is the extracellular matrix. Functionally, may play a role in hematopoiesis. In the cardiovascular system, could regulate growth factors or participate in cell signaling in maintaining large vessel integrity. Component of the elastin-associated microfibrils. The sequence is that of Microfibrillar-associated protein 5 (Mfap5) from Mus musculus (Mouse).